Reading from the N-terminus, the 92-residue chain is Conotoxin Cal22f (92 aa).

Positions 1 to 24 are cleaved as a signal peptide; it reads MMSTKGITLFLCLLLLALATSVNG. A propeptide spanning residues 25 to 44 is cleaved from the precursor; sequence GQGTRRSRMTRALHGGRPSA.

In terms of processing, contains 4 disulfide bonds. In terms of tissue distribution, expressed by the venom duct.

It localises to the secreted. Functionally, probable neurotoxin with unknown target. Possibly targets ion channels. This Californiconus californicus (California cone) protein is Conotoxin Cal22f.